Reading from the N-terminus, the 587-residue chain is Prolycopene isomerase 2, chloroplastic (587 aa).

The N-terminal 50 residues, 1 to 50 (MLCLSLNSSSTSPPKLPLHHSFSRRGIRSWVRSPCVQRKKLGFWSSPKAV), are a transit peptide targeting the chloroplast.

The protein belongs to the carotenoid/retinoid oxidoreductase family. CrtISO subfamily. The cofactor is NAD(+). Requires NADP(+) as cofactor. FAD is required as a cofactor. In terms of tissue distribution, up-regulated in the flower buds and flower lip tissue, while it is weakly expressed in leaves.

It localises to the plastid. The protein resides in the chloroplast membrane. The catalysed reaction is 7,7',9,9'-tetra-cis-lycopene = all-trans-lycopene. It functions in the pathway carotenoid biosynthesis; lycopene biosynthesis. In terms of biological role, carotene cis-trans-isomerase that converts 7,9,9'-tri-cis-neurosporene to 9'-cis-neurosporene and 7,9,9',7'-tetra-cis-lycopene (also known as prolycopene) into all-trans-lycopene. Isomerization requires redox-active components, suggesting that isomerization is achieved by a reversible redox reaction acting at specific double bonds. Isomerizes adjacent cis-double bonds at C7 and C9 pairwise into the trans-configuration, but is incapable of isomerizing single cis-double bonds at C9 and C9'. This chain is Prolycopene isomerase 2, chloroplastic (CRTISO2), found in Oncidium hybrid cultivar (Orchid).